The chain runs to 84 residues: Cell division topological specificity factor (84 aa).

Belongs to the MinE family.

Its function is as follows. Prevents the cell division inhibition by proteins MinC and MinD at internal division sites while permitting inhibition at polar sites. This ensures cell division at the proper site by restricting the formation of a division septum at the midpoint of the long axis of the cell. The chain is Cell division topological specificity factor from Desulfotalea psychrophila (strain LSv54 / DSM 12343).